We begin with the raw amino-acid sequence, 499 residues long: Protein SENSITIVE TO PROTON RHIZOTOXICITY 1 (499 aa).

The tract at residues 1–31 is disordered; the sequence is METEDDLCNTNWGSSSSKSREPGSSDCGNST. Residues 244–266 form a C2H2-type 1 zinc finger; that stretch reads HFCTICGKGFKRDANLRMHMRGH. The segment at 354 to 385 adopts a C2H2-type 2; atypical zinc-finger fold; the sequence is KHCGKNKWLCSCGTTFSRKDKLFGHIALFQGH. A disordered region spans residues 390-436; sequence PLEETKPSASTSTQRGSSEGGNNNQGMVGFNLGSASNANQETTQPGM. 2 stretches are compositionally biased toward polar residues: residues 396–415 and 422–435; these read PSAS…NNQG and GSAS…TQPG.

As to expression, expressed in roots (e.g. root tips and lateral roots), leaves, flowers (e.g. stigma, sepal, anther, and filament), stems, siliques and cotyledons.

It is found in the nucleus. Functionally, probable transcription factor. Together with STOP2, plays a critical role in tolerance to major stress factors in acid soils such as proton H(+) and aluminum ion Al(3+). Required for the expression of genes in response to acidic stress (e.g. ALMT1 and MATE), and Al-activated citrate exudation. In Arabidopsis thaliana (Mouse-ear cress), this protein is Protein SENSITIVE TO PROTON RHIZOTOXICITY 1.